The primary structure comprises 263 residues: uncharacterized protein (263 aa).

G17–S41 is an NAD(+) binding site. A substrate-binding site is contributed by S147. Y160 acts as the Proton acceptor in catalysis. K164 lines the NAD(+) pocket.

Belongs to the short-chain dehydrogenases/reductases (SDR) family.

This is an uncharacterized protein from Mycobacterium tuberculosis (strain CDC 1551 / Oshkosh).